The sequence spans 335 residues: Non-structural protein P9-1 (335 aa).

Positions 27 to 42 (FNANTKNQNQNTSNTQ) are enriched in low complexity. Residues 27-48 (FNANTKNQNQNTSNTQSSGGIT) form a disordered region.

The sequence is that of Non-structural protein P9-1 (S9) from Fiji disease virus (isolate Sugarcane) (FDV).